Reading from the N-terminus, the 298-residue chain is Probable mitochondrial 2-oxodicarboxylate carrier (298 aa).

Transmembrane regions (helical) follow at residues 6-26 (IPFP…VLTL), 62-81 (HRLY…KRAL), 105-125 (ALSI…VVPF), 159-179 (ALYN…AGYF), 203-223 (LIAG…FDVI), and 267-287 (VLRL…VIEF). Solcar repeat units lie at residues 6 to 92 (IPFP…YSKL), 102 to 188 (SSPA…IRNS), and 197 to 287 (GEIR…VIEF).

Belongs to the mitochondrial carrier (TC 2.A.29) family.

It is found in the mitochondrion inner membrane. Functionally, transports C5-C7 oxodicarboxylates across the inner membranes of mitochondria. This Schizosaccharomyces pombe (strain 972 / ATCC 24843) (Fission yeast) protein is Probable mitochondrial 2-oxodicarboxylate carrier.